Consider the following 401-residue polypeptide: Probable 2,3-bisphosphoglycerate-independent phosphoglycerate mutase (401 aa).

Belongs to the BPG-independent phosphoglycerate mutase family. A-PGAM subfamily.

It carries out the reaction (2R)-2-phosphoglycerate = (2R)-3-phosphoglycerate. The protein operates within carbohydrate degradation; glycolysis; pyruvate from D-glyceraldehyde 3-phosphate: step 3/5. In terms of biological role, catalyzes the interconversion of 2-phosphoglycerate and 3-phosphoglycerate. This chain is Probable 2,3-bisphosphoglycerate-independent phosphoglycerate mutase, found in Thermotoga maritima (strain ATCC 43589 / DSM 3109 / JCM 10099 / NBRC 100826 / MSB8).